The sequence spans 852 residues: Protein SEY1 (852 aa).

The Cytoplasmic portion of the chain corresponds to 1–738 (MNGHFAAIGN…KRSAIGGITQ (738 aa)). One can recognise a GB1/RHD3-type G domain in the interval 47 to 294 (GFNYHLISVF…IPADGLSVYA (248 aa)). Residue 57–64 (GSQSTGKS) participates in GTP binding. The stretch at 475 to 500 (QYKLFEKELDEVSARLRKEEMRRLAI) forms a coiled coil. A helical transmembrane segment spans residues 739-759 (VPLYFYVILLILGWNEILMVL). Residues 760 to 762 (RNP) are Lumenal-facing. A helical membrane pass occupies residues 763–783 (FLILLILVMGGGTYIAYSLNL). Residues 784 to 852 (LGPMMQMSNA…AQDISDDDDI (69 aa)) are Cytoplasmic-facing.

The protein belongs to the TRAFAC class dynamin-like GTPase superfamily. GB1/RHD3 GTPase family. RHD3 subfamily.

Its subcellular location is the endoplasmic reticulum membrane. Its function is as follows. Cooperates with the reticulon proteins and tubule-shaping DP1 family proteins to generate and maintain the structure of the tubular endoplasmic reticulum network. Has GTPase activity, which is required for its function in ER organization. In Podospora anserina (strain S / ATCC MYA-4624 / DSM 980 / FGSC 10383) (Pleurage anserina), this protein is Protein SEY1.